The chain runs to 1305 residues: Junctional cadherin 5-associated protein (1305 aa).

7 disordered regions span residues 13–86 (YKLS…PSTA), 120–151 (REQE…VGGR), 249–419 (GVPK…HTTA), 450–545 (KLDG…CEMQ), 575–604 (IPVK…EQSV), 616–795 (ALTG…SRQL), and 818–1005 (FNKE…GLSA). Composition is skewed to basic and acidic residues over residues 21–31 (APHEDDGERRQ), 69–82 (PESR…HGER), 120–129 (REQEAREDPG), and 140–151 (HPREGPWEVGGR). Residues 337–358 (GLEPPVYVPPPSYKSPPQPAAH) are compositionally biased toward pro residues. A compositionally biased stretch (basic and acidic residues) spans 360-369 (CPEEAVSRHE). Composition is skewed to polar residues over residues 530–545 (LVSS…CEMQ) and 579–594 (SESQ…NDLK). Residues 595-604 (QSASLQEQSV) show a composition bias toward low complexity. Polar residues predominate over residues 669–683 (QQTQTSFAHEPQSLQ). Residues 729-748 (SPKSQGSLSPSSNSAFSGSS) are compositionally biased toward low complexity. S841 bears the Phosphoserine mark. Basic and acidic residues-rich tracts occupy residues 878–889 (SKSESWSEEGRP) and 945–958 (AKPE…EQRE). A phosphoserine mark is found at S1004, S1010, S1152, and S1239. Disordered stretches follow at residues 1062–1166 (GAQR…DVET) and 1234–1305 (SRAA…VERV). Residues 1276-1288 (ADGHPAARRENGG) show a composition bias toward basic and acidic residues.

It is found in the cell junction. The protein localises to the adherens junction. The polypeptide is Junctional cadherin 5-associated protein (JCAD) (Bos taurus (Bovine)).